Here is a 349-residue protein sequence, read N- to C-terminus: Isopentenyl-diphosphate delta-isomerase (349 aa).

Residue 9–10 (RK) coordinates substrate. Residues 65-67 (AMT), Ser-95, and Asn-124 contribute to the FMN site. 95 to 97 (STH) contributes to the substrate binding site. Residue Gln-154 participates in substrate binding. Glu-155 contributes to the Mg(2+) binding site. FMN is bound by residues Lys-186, Ser-211, Thr-216, 262–264 (GLR), and 283–284 (SR).

It belongs to the IPP isomerase type 2 family. Homooctamer. Dimer of tetramers. FMN serves as cofactor. Requires NADPH as cofactor. The cofactor is Mg(2+).

It localises to the cytoplasm. It catalyses the reaction isopentenyl diphosphate = dimethylallyl diphosphate. Its function is as follows. Involved in the biosynthesis of isoprenoids. Catalyzes the 1,3-allylic rearrangement of the homoallylic substrate isopentenyl (IPP) to its allylic isomer, dimethylallyl diphosphate (DMAPP). This is Isopentenyl-diphosphate delta-isomerase from Staphylococcus aureus (strain USA300 / TCH1516).